A 363-amino-acid chain; its full sequence is MRIAISGGGTGGHIYPALAFIKEVQRRHPNVEFLYIGTENGLEKKIVERENIPFRSIEITGFKRKLSFENVKTVMRFLKGVKKSKSYLAEFKPDAVIGTGGYVCGPVVYAAAKMGIPTIVHEQNSLPGITNKFLSKYVNKVAICFEEAKSHFPSEKVVFTGNPRASEVVSIKTGRSLAEFGLSEDKKTVLIFGGSRGAAPINRAVIDMQDVLKTRDYQVLYITGEVHYEKVMNELKSKGAADNMVTKPFLHQMPEYLKAIDVIVARAGATTIAEITALGIPSVLIPSPYVTANHQEVNARSLGQHDAAIVLKETELSGEKLIEALDRIVLNEQTLKEMSERTKSLGVPDAAARLYSVLEELKK.

Residues 10-12 (TGG), Asn-124, Ser-195, and Gln-295 contribute to the UDP-N-acetyl-alpha-D-glucosamine site.

This sequence belongs to the glycosyltransferase 28 family. MurG subfamily.

It localises to the cell membrane. It carries out the reaction di-trans,octa-cis-undecaprenyl diphospho-N-acetyl-alpha-D-muramoyl-L-alanyl-D-glutamyl-meso-2,6-diaminopimeloyl-D-alanyl-D-alanine + UDP-N-acetyl-alpha-D-glucosamine = di-trans,octa-cis-undecaprenyl diphospho-[N-acetyl-alpha-D-glucosaminyl-(1-&gt;4)]-N-acetyl-alpha-D-muramoyl-L-alanyl-D-glutamyl-meso-2,6-diaminopimeloyl-D-alanyl-D-alanine + UDP + H(+). It participates in cell wall biogenesis; peptidoglycan biosynthesis. Cell wall formation. Catalyzes the transfer of a GlcNAc subunit on undecaprenyl-pyrophosphoryl-MurNAc-pentapeptide (lipid intermediate I) to form undecaprenyl-pyrophosphoryl-MurNAc-(pentapeptide)GlcNAc (lipid intermediate II). The polypeptide is UDP-N-acetylglucosamine--N-acetylmuramyl-(pentapeptide) pyrophosphoryl-undecaprenol N-acetylglucosamine transferase (Bacillus subtilis (strain 168)).